A 168-amino-acid polypeptide reads, in one-letter code: UPF0114 protein PC1_0431 (168 aa).

The next 3 helical transmembrane spans lie at 15 to 35, 53 to 73, and 136 to 156; these read LLAPVYLGLSLGLLALAIKFF, LVLVLLSLIDMTLVGGLLVMV, and LMWYVIIHLTFVLSALVMGYL.

It belongs to the UPF0114 family.

The protein resides in the cell membrane. This chain is UPF0114 protein PC1_0431, found in Pectobacterium carotovorum subsp. carotovorum (strain PC1).